The primary structure comprises 200 residues: Interferon lambda-2 (200 aa).

The N-terminal stretch at 1 to 25 (MKLDMTGDCTPVLVLMAAVLTVTGA) is a signal peptide.

Belongs to the lambda interferon family.

Its subcellular location is the secreted. Functionally, cytokine with antiviral, antitumour and immunomodulatory activities. Plays a critical role in the antiviral host defense, predominantly in the epithelial tissues. Acts as a ligand for the heterodimeric class II cytokine receptor composed of IL10RB and IFNLR1, and receptor engagement leads to the activation of the JAK/STAT signaling pathway resulting in the expression of IFN-stimulated genes (ISG), which mediate the antiviral state. Has a restricted receptor distribution and therefore restricted targets: is primarily active in epithelial cells and this cell type-selective action is because of the epithelial cell-specific expression of its receptor IFNLR1. Seems not to be essential for early virus-activated host defense in vaginal infection, but plays an important role in Toll-like receptor (TLR)-induced antiviral defense. Plays a significant role in the antiviral immune defense in the intestinal epithelium. Exerts an immunomodulatory effect by up-regulating MHC class I antigen expression. In Homo sapiens (Human), this protein is Interferon lambda-2 (IFNL2).